The chain runs to 578 residues: ATP-dependent RNA helicase CHR1 (578 aa).

The disordered stretch occupies residues 1 to 95 (MDIFRILSRG…NETKAKEEEI (95 aa)). Basic and acidic residues-rich tracts occupy residues 44–53 (EVERETDFFH) and 78–94 (NKEE…KEEE). Residues 131–159 (DMIGRFHINKKVLSNLIDNEFVEPTPIQC) carry the Q motif motif. Residues 162-339 (IPITLNNRDL…HSIMKDPLRI (178 aa)) form the Helicase ATP-binding domain. ATP is bound at residue 175–182 (APTGSGKT). The DEAD box signature appears at 286–289 (DEAD). The Helicase C-terminal domain maps to 350-514 (TIDQKLVFTG…GYSQWMEDMG (165 aa)). Composition is skewed to basic and acidic residues over residues 517–531 (SKKE…EIQR) and 561–578 (ESKQ…EREE). The disordered stretch occupies residues 517–578 (SKKEKKQIKT…ESHSNDEREE (62 aa)).

This sequence belongs to the DEAD box helicase family. DDX52/ROK1 subfamily. Interacts with the U3 snoRNA and is associated with the 90S and 40S pre-ribosomes.

It localises to the nucleus. Its subcellular location is the nucleolus. It carries out the reaction ATP + H2O = ADP + phosphate + H(+). In terms of biological role, ATP-dependent RNA helicase involved in 40S ribosomal subunit biogenesis. Required for the processing and cleavage of 35S pre-rRNA at sites A0, A1, and A2, leading to mature 18S rRNA. In Candida albicans (strain SC5314 / ATCC MYA-2876) (Yeast), this protein is ATP-dependent RNA helicase CHR1 (CHR1).